Consider the following 296-residue polypeptide: uncharacterized protein (296 aa).

Its subcellular location is the mitochondrion. This is an uncharacterized protein from Podospora anserina (strain S / ATCC MYA-4624 / DSM 980 / FGSC 10383) (Pleurage anserina).